Consider the following 401-residue polypeptide: Elongation factor Tu 1 (401 aa).

Residues 10 to 209 form the tr-type G domain; it reads KPHVNVGTIG…AVDEYIPTPV (200 aa). Residues 19–26 form a G1 region; that stretch reads GHVDHGKT. 19–26 is a GTP binding site; it reads GHVDHGKT. Residue Thr-26 coordinates Mg(2+). A G2 region spans residues 60-64; it reads GITIA. The segment at 81–84 is G3; the sequence is DCPG. Residues 81–85 and 136–139 contribute to the GTP site; these read DCPGH and NKVD. Residues 136 to 139 form a G4 region; sequence NKVD. Residues 174–176 form a G5 region; sequence SAL.

It belongs to the TRAFAC class translation factor GTPase superfamily. Classic translation factor GTPase family. EF-Tu/EF-1A subfamily. In terms of assembly, monomer.

The protein localises to the cytoplasm. It catalyses the reaction GTP + H2O = GDP + phosphate + H(+). Functionally, GTP hydrolase that promotes the GTP-dependent binding of aminoacyl-tRNA to the A-site of ribosomes during protein biosynthesis. The protein is Elongation factor Tu 1 of Roseiflexus castenholzii (strain DSM 13941 / HLO8).